The primary structure comprises 452 residues: Retinoid-inducible serine carboxypeptidase (452 aa).

An N-terminal signal peptide occupies residues 1 to 28 (MELSRRICLVRLWLLLLSFLLGFSAGSA). Residues Asn64, Asn102, and Asn126 are each glycosylated (N-linked (GlcNAc...) asparagine). The active site involves Ser167. N-linked (GlcNAc...) asparagine glycosylation is found at Asn192 and Asn362. Active-site residues include Asp371 and His431.

The protein belongs to the peptidase S10 family. Highly expressed in aorta, bladder, and kidney with much lower levels in all other tissues analyzed. Expression in kidney is restricted to proximal convoluted tubules.

The protein localises to the secreted. Functionally, may be involved in vascular wall and kidney homeostasis. The chain is Retinoid-inducible serine carboxypeptidase (Scpep1) from Rattus norvegicus (Rat).